Consider the following 1070-residue polypeptide: DNA-directed RNA polymerase subunit beta (1070 aa).

This sequence belongs to the RNA polymerase beta chain family. In plastids the minimal PEP RNA polymerase catalytic core is composed of four subunits: alpha, beta, beta', and beta''. When a (nuclear-encoded) sigma factor is associated with the core the holoenzyme is formed, which can initiate transcription.

Its subcellular location is the plastid. It is found in the chloroplast. It carries out the reaction RNA(n) + a ribonucleoside 5'-triphosphate = RNA(n+1) + diphosphate. Its function is as follows. DNA-dependent RNA polymerase catalyzes the transcription of DNA into RNA using the four ribonucleoside triphosphates as substrates. The polypeptide is DNA-directed RNA polymerase subunit beta (Phaseolus vulgaris (Kidney bean)).